Here is a 122-residue protein sequence, read N- to C-terminus: Large ribosomal subunit protein uL14c (122 aa).

It belongs to the universal ribosomal protein uL14 family. In terms of assembly, part of the 50S ribosomal subunit.

It localises to the plastid. Its function is as follows. Binds to 23S rRNA. In Helicosporidium sp. subsp. Simulium jonesii (Green alga), this protein is Large ribosomal subunit protein uL14c (rpl14).